The following is a 930-amino-acid chain: Protein translocase subunit SecA (930 aa).

Residues Gln87, 105–109 (GEGKT), and Asp516 each bind ATP. Zn(2+)-binding residues include Cys914, Cys916, Cys925, and His926.

Belongs to the SecA family. In terms of assembly, monomer and homodimer. Part of the essential Sec protein translocation apparatus which comprises SecA, SecYEG and auxiliary proteins SecDF-YajC and YidC. The cofactor is Zn(2+).

The protein resides in the cell inner membrane. The protein localises to the cytoplasm. The enzyme catalyses ATP + H2O + cellular proteinSide 1 = ADP + phosphate + cellular proteinSide 2.. Part of the Sec protein translocase complex. Interacts with the SecYEG preprotein conducting channel. Has a central role in coupling the hydrolysis of ATP to the transfer of proteins into and across the cell membrane, serving both as a receptor for the preprotein-SecB complex and as an ATP-driven molecular motor driving the stepwise translocation of polypeptide chains across the membrane. In Variovorax paradoxus (strain S110), this protein is Protein translocase subunit SecA.